The sequence spans 225 residues: RNA-binding protein 24 (225 aa).

An RRM domain is found at T11–L88.

It is found in the nucleus. The protein localises to the cytoplasm. Multifunctional RNA-binding protein involved in the regulation of pre-mRNA splicing, mRNA stability and mRNA translation important for cell fate decision and differentiation. Plays a major role in pre-mRNA alternative splicing regulation. Mediates preferentially muscle-specific exon inclusion in numerous mRNAs important for striated cardiac and skeletal muscle cell differentiation. Binds to intronic splicing enhancer (ISE) composed of stretches of GU-rich motifs localized in flanking intron of exon that will be included by alternative splicing. Involved in embryonic stem cell (ESC) transition to cardiac cell differentiation by promoting pre-mRNA alternative splicing events of several pluripotency and/or differentiation genes. Plays a role in the regulation of mRNA stability and mRNA translation to which it is bound. Involved in myogenic differentiation by regulating MYOG levels. Binds to a huge amount of mRNAs. Involved in embryonic heart development and myogenic differentiation of somitic muscle progenitors. In Gallus gallus (Chicken), this protein is RNA-binding protein 24.